A 343-amino-acid chain; its full sequence is Ribosomal RNA small subunit methyltransferase C (343 aa).

This sequence belongs to the methyltransferase superfamily. RsmC family. In terms of assembly, monomer.

The protein resides in the cytoplasm. It catalyses the reaction guanosine(1207) in 16S rRNA + S-adenosyl-L-methionine = N(2)-methylguanosine(1207) in 16S rRNA + S-adenosyl-L-homocysteine + H(+). Specifically methylates the guanine in position 1207 of 16S rRNA in the 30S particle. This chain is Ribosomal RNA small subunit methyltransferase C, found in Pseudoalteromonas atlantica (strain T6c / ATCC BAA-1087).